The chain runs to 479 residues: MNAAVMTSSTNFSDYVIADLSLSVWGDKEIRIAETEMPGLMAIREEFAAAQPLKGARITGSIHMTIQTAVLIQTLEALGAKVRWASCNIYSTQDHAAAAIAAAGTPVFAVKGETLDDYWEYTHRIFEWPNDDKGAPVYSNMILDDGGDATLLLHLGTRAEKDASVLNNPGSEEEICLFNSIKKHLAVDATWYSKRLPQILGVTEETTTGVHRLYQMHKEGKLAFPAINVNDSVTKSKFDNLYGCRESLVDGIKRATDVMIAGKVAVIAGYGDVGKGSAQAMRALSAQVWVTEIDPICALQAAMEGYRVVTMDYAAEHGDIFVTCTGNYHVITHDHMAKMKDQAIVCNIGHFDNEIEVAALKQYTWENIKPQVDHIIFPDGKRIILLAEGRLVNLGCGTGHPSYVMSSSFANQTIAQIELYANTKNYPVGVYTLPKHLDEKVARLQLKKLNSQLTTLTDEQANYIGVQKAGPYKPEHYRY.

Substrate is bound by residues Thr65, Asp145, and Glu205. NAD(+) is bound at residue 206-208 (TTT). Substrate contacts are provided by Lys235 and Asp239. NAD(+) is bound by residues Asn240, 269–274 (GYGDVG), Glu292, Asn327, 348–350 (IGH), and Asn393.

Belongs to the adenosylhomocysteinase family. The cofactor is NAD(+).

It localises to the cytoplasm. It carries out the reaction S-adenosyl-L-homocysteine + H2O = L-homocysteine + adenosine. It functions in the pathway amino-acid biosynthesis; L-homocysteine biosynthesis; L-homocysteine from S-adenosyl-L-homocysteine: step 1/1. In terms of biological role, may play a key role in the regulation of the intracellular concentration of adenosylhomocysteine. The sequence is that of Adenosylhomocysteinase from Herminiimonas arsenicoxydans.